The chain runs to 327 residues: Methionine import ATP-binding protein MetN (327 aa).

In terms of domain architecture, ABC transporter spans 3–239 (VELKNIEKIY…PKHAVTKELL (237 aa)). 36-43 (GYSGAGKS) lines the ATP pocket.

Belongs to the ABC transporter superfamily. Methionine importer (TC 3.A.1.24) family. The complex is composed of two ATP-binding proteins (MetN), two transmembrane proteins (MetI) and a solute-binding protein (MetQ).

Its subcellular location is the cell inner membrane. It catalyses the reaction L-methionine(out) + ATP + H2O = L-methionine(in) + ADP + phosphate + H(+). The enzyme catalyses D-methionine(out) + ATP + H2O = D-methionine(in) + ADP + phosphate + H(+). Part of the ABC transporter complex MetNIQ involved in methionine import. Responsible for energy coupling to the transport system. The protein is Methionine import ATP-binding protein MetN of Helicobacter pylori (strain HPAG1).